The primary structure comprises 943 residues: Translation initiation factor IF-2 (943 aa).

Residues 46–359 (IKGMLSKQSA…MPQRKERPLP (314 aa)) are disordered. Residues 57–76 (KAPSSQAAKTPAKAAKTSSA) are compositionally biased toward low complexity. 2 stretches are compositionally biased toward basic and acidic residues: residues 92-103 (SNDHADVAEHSQ) and 110-124 (AKQENKPARSNKTSD). The segment covering 130 to 141 (SKSTILRPRSTQ) has biased composition (polar residues). Positions 142–190 (TAHTNTNHNRGGNTASANNTANGRNSNRSNNNNNNRSANNANRSGNNNR) are enriched in low complexity. 3 stretches are compositionally biased toward basic and acidic residues: residues 191–205 (SNERNRNDRNRRFDN), 239–250 (ASERQQPKRQEA), and 259–271 (KRSEQPRTERPRT). 2 stretches are compositionally biased toward low complexity: residues 289–299 (PAAAAPKPASA) and 315–330 (NFGRSNSYGNRNGFNR). Basic residues predominate over residues 331–342 (NNRRNKKNKRRQ). Residues 346 to 358 (PKKEMPQRKERPL) show a composition bias toward basic and acidic residues. Residues 444–613 (PRPPVVTIMG…LLEADVLELK (170 aa)) enclose the tr-type G domain. The interval 453–460 (GHVDHGKT) is G1. 453–460 (GHVDHGKT) serves as a coordination point for GTP. The G2 stretch occupies residues 478-482 (GITQH). Residues 499-502 (DTPG) form a G3 region. GTP contacts are provided by residues 499–503 (DTPGH) and 553–556 (NKID). The G4 stretch occupies residues 553 to 556 (NKID). The tract at residues 589-591 (SAK) is G5.

The protein belongs to the TRAFAC class translation factor GTPase superfamily. Classic translation factor GTPase family. IF-2 subfamily.

It localises to the cytoplasm. Its function is as follows. One of the essential components for the initiation of protein synthesis. Protects formylmethionyl-tRNA from spontaneous hydrolysis and promotes its binding to the 30S ribosomal subunits. Also involved in the hydrolysis of GTP during the formation of the 70S ribosomal complex. The chain is Translation initiation factor IF-2 from Lacticaseibacillus casei (strain BL23) (Lactobacillus casei).